The primary structure comprises 103 residues: Viscotoxin-B (103 aa).

The signal sequence occupies residues 1–6 (FRNVES). Disulfide bonds link C9/C46, C10/C38, and C22/C32. The propeptide at 53-103 (FYCTLGCQSSKCASITTPPNSEVDAEAVRCKAACSNLCDFGVTTNQEIQDD) is acidic domain.

It belongs to the plant thionin (TC 1.C.44) family.

Its subcellular location is the secreted. Functionally, thionins are small plant proteins which are toxic to animal cells. They seem to exert their toxic effect at the level of the cell membrane. Their precise function is not known. This chain is Viscotoxin-B (THI2.2), found in Viscum album (European mistletoe).